The chain runs to 158 residues: MSKKTTPSSAPLDNTPYDVTEQVGHLLRKAYQRHTAIFQQQACDPQLTSIQFVTLCALRDHGPSSQAELIKATAVDQATIRGIVERLKARELVQLSPDPGDRRKVIVELTESGAALLDAMIPCARQISELSMGSLNAGERVAILYLLRKMIDSDENAG.

The HTH marR-type domain maps to threonine 20–aspartate 152. The H-T-H motif DNA-binding region spans glutamine 66–alanine 89.

The protein operates within cofactor degradation; nicotinate degradation [regulation]. Its function is as follows. Transcriptional repressor for the nicCDEFTP and nicXR operons, encoding the lower aerobic nicotinate degradation pathway. Acts under non-induced conditions: repression of the nicCDEFTP and nicXR operons becomes alleviated in presence of 6-hydroxynicotinate (6HNA). The chain is HTH-type transcriptional repressor NicR (nicR) from Pseudomonas putida (strain ATCC 47054 / DSM 6125 / CFBP 8728 / NCIMB 11950 / KT2440).